The primary structure comprises 309 residues: MSIRIVPKDQLGKQREKGTTAGNIPPLLFANLKSLYTRRTERLQQLALDNPLADYLDFAAKITEAQQKALHDHPLVLDMQAELVQSAASGKPPLDGSVFPRTEHWRKLLSALIAELRHDAPDHILAVLDNLDKASVHELELYADALLNRDFSQVGSEKAPFIWAALSLYWAQMASQIPGKARAEYGEHRQFCPVCGSIPVSSVVHIGTHNGLRYLHCNLCESEWHVVRIKCSNCEQTRDLNYWSLDSELAAVKAESCGDCGTYLKILYQEKDPQVEAVADDLASLILDAKMEGEGFARSSINPFLFPGE.

Belongs to the FdhE family.

Its subcellular location is the cytoplasm. Its function is as follows. Necessary for formate dehydrogenase activity. The protein is Protein FdhE homolog of Yersinia pestis bv. Antiqua (strain Antiqua).